We begin with the raw amino-acid sequence, 121 residues long: Ribonuclease P protein component (121 aa).

Belongs to the RnpA family. As to quaternary structure, consists of a catalytic RNA component (M1 or rnpB) and a protein subunit.

It catalyses the reaction Endonucleolytic cleavage of RNA, removing 5'-extranucleotides from tRNA precursor.. Its function is as follows. RNaseP catalyzes the removal of the 5'-leader sequence from pre-tRNA to produce the mature 5'-terminus. It can also cleave other RNA substrates such as 4.5S RNA. The protein component plays an auxiliary but essential role in vivo by binding to the 5'-leader sequence and broadening the substrate specificity of the ribozyme. This is Ribonuclease P protein component from Neisseria meningitidis serogroup A / serotype 4A (strain DSM 15465 / Z2491).